The sequence spans 301 residues: Phosphatidylglycerol--prolipoprotein diacylglyceryl transferase (301 aa).

The next 4 membrane-spanning stretches (helical) occupy residues 10 to 30 (IAFSLGPVKVHWYGLMYLASF), 57 to 77 (LLFYAMMGVVLGGRVGYMLFY), 92 to 112 (VWEGGMSFHGGLIGVLLAVAW), and 119 to 139 (LQMFDVLDFGAPLVPVGLGFG). Arg-140 provides a ligand contact to a 1,2-diacyl-sn-glycero-3-phospho-(1'-sn-glycerol). The next 3 membrane-spanning stretches (helical) occupy residues 202–222 (PSQLYEAFLEGLVMFIVLWLF), 230–250 (YAVSGLFALLYGVFRFLVEFV), and 264–284 (LTRGQILSLPLIVIGLFLFWL).

Belongs to the Lgt family.

The protein localises to the cell inner membrane. It carries out the reaction L-cysteinyl-[prolipoprotein] + a 1,2-diacyl-sn-glycero-3-phospho-(1'-sn-glycerol) = an S-1,2-diacyl-sn-glyceryl-L-cysteinyl-[prolipoprotein] + sn-glycerol 1-phosphate + H(+). It functions in the pathway protein modification; lipoprotein biosynthesis (diacylglyceryl transfer). Catalyzes the transfer of the diacylglyceryl group from phosphatidylglycerol to the sulfhydryl group of the N-terminal cysteine of a prolipoprotein, the first step in the formation of mature lipoproteins. The chain is Phosphatidylglycerol--prolipoprotein diacylglyceryl transferase from Xylella fastidiosa (strain 9a5c).